The primary structure comprises 328 residues: Acetyl-coenzyme A carboxylase carboxyl transferase subunit alpha (328 aa).

The CoA carboxyltransferase C-terminal domain occupies 42-296 (SFKEQLSILK…KESLISELHF (255 aa)).

It belongs to the AccA family. In terms of assembly, acetyl-CoA carboxylase is a heterohexamer composed of biotin carboxyl carrier protein (accB), biotin carboxylase (accC) and two subunits each of ACCase subunit alpha (accA) and ACCase subunit beta (accD).

Its subcellular location is the plastid. The protein resides in the chloroplast. The catalysed reaction is N(6)-carboxybiotinyl-L-lysyl-[protein] + acetyl-CoA = N(6)-biotinyl-L-lysyl-[protein] + malonyl-CoA. It functions in the pathway lipid metabolism; malonyl-CoA biosynthesis; malonyl-CoA from acetyl-CoA: step 1/1. In terms of biological role, component of the acetyl coenzyme A carboxylase (ACC) complex. First, biotin carboxylase catalyzes the carboxylation of biotin on its carrier protein (BCCP) and then the CO(2) group is transferred by the carboxyltransferase to acetyl-CoA to form malonyl-CoA. In Gracilaria tenuistipitata var. liui (Red alga), this protein is Acetyl-coenzyme A carboxylase carboxyl transferase subunit alpha.